The following is a 128-amino-acid chain: Nitrogen fixation nifHD region GlnB-like protein 2 (128 aa).

The protein belongs to the P(II) protein family.

Its function is as follows. Could be involved in the regulation of nitrogen fixation. This is Nitrogen fixation nifHD region GlnB-like protein 2 (glnBB) from Methanothermococcus thermolithotrophicus (Methanococcus thermolithotrophicus).